Here is a 224-residue protein sequence, read N- to C-terminus: Ribonuclease HII (224 aa).

The RNase H type-2 domain occupies 21-223 (RAIAGIDEAG…IRNAALEGEQ (203 aa)). Positions 27, 28, and 124 each coordinate a divalent metal cation.

This sequence belongs to the RNase HII family. Mn(2+) is required as a cofactor. The cofactor is Mg(2+).

It is found in the cytoplasm. The catalysed reaction is Endonucleolytic cleavage to 5'-phosphomonoester.. Functionally, endonuclease that specifically degrades the RNA of RNA-DNA hybrids. The polypeptide is Ribonuclease HII (Roseiflexus castenholzii (strain DSM 13941 / HLO8)).